A 61-amino-acid chain; its full sequence is [Val1,Thr6]-bradykinyl-Val,Asp (61 aa).

The N-terminal stretch at 1 to 22 (MAFLKKSLFLVLFLGVVSLSFC) is a signal peptide. Residues 23-48 (EEEEREEHEEEKREAEAAESAENLIS) constitute a propeptide that is removed on maturation. Positions 27-61 (REEHEEEKREAEAAESAENLISKRVPPGFTPFRVD) are disordered.

In terms of tissue distribution, expressed by the skin glands. Expression levels in inguinal glands and granular glands are virtually the same.

Its subcellular location is the secreted. Induces contraction of rat ileum smooth muscle (EC(50)=2.73 uM) but has no activity towards rat smooth muscle from tail artery, urinary bladder or uterus. Binds to both bradykinin receptor B1 (BDKRB1) and B2 (BDKRB2); the effect via BDKRB1 is stronger. The polypeptide is [Val1,Thr6]-bradykinyl-Val,Asp (Physalaemus nattereri (Cuyaba dwarf frog)).